The chain runs to 332 residues: Ribosomal RNA small subunit methyltransferase C (332 aa).

It belongs to the methyltransferase superfamily. RsmC family. Monomer.

It localises to the cytoplasm. The catalysed reaction is guanosine(1207) in 16S rRNA + S-adenosyl-L-methionine = N(2)-methylguanosine(1207) in 16S rRNA + S-adenosyl-L-homocysteine + H(+). In terms of biological role, specifically methylates the guanine in position 1207 of 16S rRNA in the 30S particle. The sequence is that of Ribosomal RNA small subunit methyltransferase C from Pseudomonas putida (strain ATCC 700007 / DSM 6899 / JCM 31910 / BCRC 17059 / LMG 24140 / F1).